The sequence spans 450 residues: tRNA modification GTPase MnmE (450 aa).

The (6S)-5-formyl-5,6,7,8-tetrahydrofolate site is built by Arg20, Glu78, and Lys117. The 162-residue stretch at 211-372 (GLRMVIVGKP…LEESIYRETQ (162 aa)) folds into the TrmE-type G domain. K(+) is bound at residue Asn221. GTP is bound by residues 221–226 (NVGKST), 240–246 (TDIPGTT), 265–268 (DTAG), 326–329 (NKVD), and 353–355 (SAL). Ser225 serves as a coordination point for Mg(2+). 3 residues coordinate K(+): Thr240, Ile242, and Thr245. A Mg(2+)-binding site is contributed by Thr246. Lys450 contacts (6S)-5-formyl-5,6,7,8-tetrahydrofolate.

This sequence belongs to the TRAFAC class TrmE-Era-EngA-EngB-Septin-like GTPase superfamily. TrmE GTPase family. As to quaternary structure, homodimer. Heterotetramer of two MnmE and two MnmG subunits. Requires K(+) as cofactor.

Its subcellular location is the cytoplasm. In terms of biological role, exhibits a very high intrinsic GTPase hydrolysis rate. Involved in the addition of a carboxymethylaminomethyl (cmnm) group at the wobble position (U34) of certain tRNAs, forming tRNA-cmnm(5)s(2)U34. The chain is tRNA modification GTPase MnmE from Thermotoga maritima (strain ATCC 43589 / DSM 3109 / JCM 10099 / NBRC 100826 / MSB8).